A 252-amino-acid polypeptide reads, in one-letter code: 3-deoxy-manno-octulosonate cytidylyltransferase (252 aa).

It belongs to the KdsB family.

It is found in the cytoplasm. It carries out the reaction 3-deoxy-alpha-D-manno-oct-2-ulosonate + CTP = CMP-3-deoxy-beta-D-manno-octulosonate + diphosphate. The protein operates within nucleotide-sugar biosynthesis; CMP-3-deoxy-D-manno-octulosonate biosynthesis; CMP-3-deoxy-D-manno-octulosonate from 3-deoxy-D-manno-octulosonate and CTP: step 1/1. Its pathway is bacterial outer membrane biogenesis; lipopolysaccharide biosynthesis. Activates KDO (a required 8-carbon sugar) for incorporation into bacterial lipopolysaccharide in Gram-negative bacteria. The chain is 3-deoxy-manno-octulosonate cytidylyltransferase from Vibrio campbellii (strain ATCC BAA-1116).